We begin with the raw amino-acid sequence, 248 residues long: uncharacterized protein (248 aa).

Residue S141 coordinates substrate. The active-site Proton acceptor is the Y154.

This sequence belongs to the short-chain dehydrogenases/reductases (SDR) family.

This is an uncharacterized protein from Methylorubrum extorquens (strain ATCC 14718 / DSM 1338 / JCM 2805 / NCIMB 9133 / AM1) (Methylobacterium extorquens).